Reading from the N-terminus, the 127-residue chain is Ribonuclease P protein component (127 aa).

Belongs to the RnpA family. As to quaternary structure, consists of a catalytic RNA component (M1 or rnpB) and a protein subunit.

It carries out the reaction Endonucleolytic cleavage of RNA, removing 5'-extranucleotides from tRNA precursor.. RNaseP catalyzes the removal of the 5'-leader sequence from pre-tRNA to produce the mature 5'-terminus. It can also cleave other RNA substrates such as 4.5S RNA. The protein component plays an auxiliary but essential role in vivo by binding to the 5'-leader sequence and broadening the substrate specificity of the ribozyme. In Corynebacterium urealyticum (strain ATCC 43042 / DSM 7109), this protein is Ribonuclease P protein component.